Here is a 529-residue protein sequence, read N- to C-terminus: Plexin domain-containing protein 2 (529 aa).

A signal peptide spans 1-30 (MARFPKADLAAAGVMLLCHFFTDQFQFADG). The Extracellular segment spans residues 31-454 (KPGDQILDWQ…AEKKGGTLHA (424 aa)). Residues 80-104 (ASVGQDSPEPRSFTDLLLDDGQDNN) are disordered. Residues Asn103 and Asn160 are each glycosylated (N-linked (GlcNAc...) asparagine). Residues 327 to 372 (TCLQFNRCGPCVSSQIGFNCSWCSKLQRCSSGFDRHRQDWVDSGCP) form the PSI domain. Residues 455 to 475 (GLIIGILILVLIVATAILVTV) form a helical membrane-spanning segment. Over 476–529 (YMYHHPTSAASIFFIERRPSRWPAMKFRRGSGHPAYAEVEPVGEKEGFIVSEQC) the chain is Cytoplasmic. A Phosphoserine modification is found at Ser506.

Belongs to the plexin family. As to quaternary structure, interacts with CTTN. Expressed in the endothelial cells of the stroma but not in the endothelial cells of normal colonic tissue.

The protein resides in the membrane. Its function is as follows. May play a role in tumor angiogenesis. In Homo sapiens (Human), this protein is Plexin domain-containing protein 2 (PLXDC2).